A 411-amino-acid polypeptide reads, in one-letter code: Tyrosine--tRNA ligase (411 aa).

Residue Y33 coordinates L-tyrosine. The short motif at 38–47 (PTAESLHLGN) is the 'HIGH' region element. Residues Y160 and Q164 each contribute to the L-tyrosine site. Residues 222–226 (KIGKS) carry the 'KMSKS' region motif. K225 serves as a coordination point for ATP. An S4 RNA-binding domain is found at 347-411 (SVIETLIKNK…KKQVILFKTV (65 aa)).

This sequence belongs to the class-I aminoacyl-tRNA synthetase family. TyrS type 1 subfamily. In terms of assembly, homodimer.

It is found in the cytoplasm. The catalysed reaction is tRNA(Tyr) + L-tyrosine + ATP = L-tyrosyl-tRNA(Tyr) + AMP + diphosphate + H(+). In terms of biological role, catalyzes the attachment of tyrosine to tRNA(Tyr) in a two-step reaction: tyrosine is first activated by ATP to form Tyr-AMP and then transferred to the acceptor end of tRNA(Tyr). The sequence is that of Tyrosine--tRNA ligase from Mycoplasmopsis agalactiae (strain NCTC 10123 / CIP 59.7 / PG2) (Mycoplasma agalactiae).